We begin with the raw amino-acid sequence, 419 residues long: MPLNANFPSKNYDYDYDLQPCFFFLEEENFYHQQSRLQPPAPSEDIWKKFELLPTPPLSPSRRSSQSSLFPSTADQLEMVTEFLGGDMVNQSFICEADDEALLKSIVIQDCMWSGFSAAAKLEKVVSEKLASYQASRKESALSSSSPCQSQPPPSPLKSPSCHGSLSLGGTHRSSHGFLQDPSSDCVDPSVVFPYPLNDSISNASSPCQDLILETPPISSNSSSSESEEEPEDEDEDCDEEEEIDVVTVEKRQSASKRVESSSHSQPSRPHYSPLVLKRCHVPIHQHNYAASPSTKVDYVSSKRAKLESNIRVLKQISNNRKCASPRSSDSEENDKRKTHNVLERQRRNELKLSFFALRDQVPEVASNEKAPKVVILKKATEYAISLQEDERRLIRETEQLKYRKEQLKQRLQQLRNFV.

The 9aaTAD motif lies at 78 to 86 (EMVTEFLGG). 3 disordered regions span residues 141–166 (ALSS…HGSL), 206–274 (SPCQ…HYSP), and 319–344 (NNRK…NVLE). The segment covering 226–245 (ESEEEPEDEDEDCDEEEEID) has biased composition (acidic residues). Basic and acidic residues predominate over residues 248 to 261 (TVEKRQSASKRVES). Residues 319 to 328 (NNRKCASPRS) show a composition bias toward polar residues. The region spanning 335–387 (DKRKTHNVLERQRRNELKLSFFALRDQVPEVASNEKAPKVVILKKATEYAISL) is the bHLH domain. The segment at 387 to 415 (LQEDERRLIRETEQLKYRKEQLKQRLQQL) is leucine-zipper.

In terms of assembly, efficient DNA binding requires dimerization with another bHLH protein. Binds DNA as a heterodimer with MAX.

The protein localises to the nucleus. Functionally, transcription factor that binds DNA in a non-specific manner, yet also specifically recognizes the core sequence 5'-CAC[GA]TG-3'. Activates the transcription of growth-related genes. The polypeptide is Transcriptional regulator Myc-A (myc-a) (Xenopus laevis (African clawed frog)).